The sequence spans 831 residues: MKLSRRDFMKANAAVAAAAAAGLTIPTVAKAVVGETTNAIKWDKAPCRFCGTGCGVLVGTQNGRIVASQGDPDSPVNRGLNCVKGYFLPKIMYGKDRLTQPLLRMKDGQYDKEGDFTPISWEKAFDIMELKFKNALKEKGPTAVGMFGSGQWTVWEGYAASKLLKAGFRSNNLDPNARHCMASSVVGFMRTFGMDEPMGCYDDIEEADAFVLWGSNMAEMHPILWSRMTSRRLTNEHVRIAVLSTFEHRSFELADNPIVFTPQTDLVIMNYIANYIIQNNAVDQGFLDRHVNFRRGATDIGYGLRPTHPLEKAAKNPGSDASEPMSFDDFKAFVAEYTLEKTAKMSGVPEDQLESLAQLYADPKVKLVSYWTMGFNQHTRGVWANNMCYNLHLLTGKISKPGSGPFSLTGQPSACGTAREVGTFSHRLPADMVVTNEKHRQIAETKWQLPAGTIPEKVGLHAVAQDRALKDGTLNAYWVMCNNNMQAGPNINEERMPGWRDPRNFIVVSDPYPTISALAADLILPTAMWVEKEGAYGNAERRTQFWRQQVPAPGEAKSDLWQMVEFAKRFKVEEVWPDELINKKPEYRGKTLYDVLFANNVVNKYPLSEIPADQLNDEARDFGFYIQKGLFEEYADFGRGHGHDLAPFDRYHQERGLRWPVVNGKETLWRYREGFDPFVPKGEDVRFYGKPDGKAVIFALPYEPAAESPDQEYDLWLSTGRVLEHWHTGSMTRRVPELHRAFPEAVLFIHPLDAKARGLRRGDKVKVISRRGEVISLVETRGRNRPPQGLVYMPFFDAAQLVNNLTLDATDPLSKETDFKKCAVKLARVVA.

Residues 1 to 31 constitute a signal peptide (tat-type signal); it reads MKLSRRDFMKANAAVAAAAAAGLTIPTVAKA. In terms of domain architecture, 4Fe-4S Mo/W bis-MGD-type spans 40-96; sequence IKWDKAPCRFCGTGCGVLVGTQNGRIVASQGDPDSPVNRGLNCVKGYFLPKIMYGKD. [4Fe-4S] cluster is bound by residues Cys47, Cys50, Cys54, and Cys82. Mo-bis(molybdopterin guanine dinucleotide) contacts are provided by residues Lys84, Gln151, Asn176, Cys180, 213-220, 244-248, 263-265, Met373, Gln377, Asn483, 509-510, Lys532, Asp559, and 719-728; these read WGSNMAEM, STFEH, QTD, SD, and TGRVLEHWHT. Phe795 provides a ligand contact to substrate. Mo-bis(molybdopterin guanine dinucleotide) contacts are provided by Asn803 and Lys820.

The protein belongs to the prokaryotic molybdopterin-containing oxidoreductase family. NasA/NapA/NarB subfamily. In terms of assembly, component of the periplasmic nitrate reductase NapAB complex composed of NapA and NapB. It depends on [4Fe-4S] cluster as a cofactor. Requires Mo-bis(molybdopterin guanine dinucleotide) as cofactor. Post-translationally, predicted to be exported by the Tat system. The position of the signal peptide cleavage has not been experimentally proven.

It is found in the periplasm. It carries out the reaction 2 Fe(II)-[cytochrome] + nitrate + 2 H(+) = 2 Fe(III)-[cytochrome] + nitrite + H2O. Its function is as follows. Catalytic subunit of the periplasmic nitrate reductase complex NapAB. Receives electrons from NapB and catalyzes the reduction of nitrate to nitrite. The chain is Periplasmic nitrate reductase from Yersinia enterocolitica serotype O:8 / biotype 1B (strain NCTC 13174 / 8081).